The sequence spans 405 residues: S-adenosylmethionine synthase (405 aa).

G141 to D146 contacts ATP.

This sequence belongs to the AdoMet synthase 2 family. Mg(2+) is required as a cofactor.

The enzyme catalyses L-methionine + ATP + H2O = S-adenosyl-L-methionine + phosphate + diphosphate. It functions in the pathway amino-acid biosynthesis; S-adenosyl-L-methionine biosynthesis; S-adenosyl-L-methionine from L-methionine: step 1/1. Catalyzes the formation of S-adenosylmethionine from methionine and ATP. The sequence is that of S-adenosylmethionine synthase from Methanococcus maripaludis (strain C6 / ATCC BAA-1332).